Reading from the N-terminus, the 489-residue chain is Mitochondrial distribution and morphology protein 34 (489 aa).

The SMP-LTD domain occupies 1-205 (MSFNINWDSI…LPSVLYKFSQ (205 aa)).

Belongs to the MDM34 family. In terms of assembly, component of the ER-mitochondria encounter structure (ERMES) or MDM complex, composed of MMM1, MDM10, MDM12 and MDM34.

It localises to the mitochondrion outer membrane. Its function is as follows. Component of the ERMES/MDM complex, which serves as a molecular tether to connect the endoplasmic reticulum (ER) and mitochondria. Components of this complex are involved in the control of mitochondrial shape and protein biogenesis, and function in nonvesicular lipid trafficking between the ER and mitochondria. MDM34 is required for the interaction of the ER-resident membrane protein MMM1 and the outer mitochondrial membrane-resident beta-barrel protein MDM10. The sequence is that of Mitochondrial distribution and morphology protein 34 from Komagataella phaffii (strain GS115 / ATCC 20864) (Yeast).